We begin with the raw amino-acid sequence, 628 residues long: Chaperone protein HtpG (628 aa).

Positions 1–337 are a; substrate-binding; the sequence is MSEKKYTFET…SADLPLNVSR (337 aa). Positions 338 to 554 are b; that stretch reads EILQHNKVID…DYGMSLHMQK (217 aa). The segment at 555–628 is c; that stretch reads MMEEAGQSFM…FVKLVNKYIR (74 aa).

It belongs to the heat shock protein 90 family. Homodimer.

The protein localises to the cytoplasm. Its function is as follows. Molecular chaperone. Has ATPase activity. In Francisella tularensis subsp. tularensis (strain FSC 198), this protein is Chaperone protein HtpG.